A 332-amino-acid polypeptide reads, in one-letter code: Ribosomal RNA small subunit methyltransferase H (332 aa).

Residues 36 to 38 (GGY), D54, F81, D102, and Q109 contribute to the S-adenosyl-L-methionine site. Residues 295-322 (PRARSAKLRGAERTESPAHAAGDLPGWP) are disordered.

This sequence belongs to the methyltransferase superfamily. RsmH family.

Its subcellular location is the cytoplasm. The catalysed reaction is cytidine(1402) in 16S rRNA + S-adenosyl-L-methionine = N(4)-methylcytidine(1402) in 16S rRNA + S-adenosyl-L-homocysteine + H(+). Specifically methylates the N4 position of cytidine in position 1402 (C1402) of 16S rRNA. This chain is Ribosomal RNA small subunit methyltransferase H, found in Rhodopseudomonas palustris (strain ATCC BAA-98 / CGA009).